The sequence spans 207 residues: Ribosomal RNA small subunit methyltransferase G (207 aa).

S-adenosyl-L-methionine contacts are provided by residues Gly76, Gln81, 127–128 (VE), and Arg141.

Belongs to the methyltransferase superfamily. RNA methyltransferase RsmG family.

The protein localises to the cytoplasm. The enzyme catalyses guanosine(527) in 16S rRNA + S-adenosyl-L-methionine = N(7)-methylguanosine(527) in 16S rRNA + S-adenosyl-L-homocysteine. Its function is as follows. Specifically methylates the N7 position of guanine in position 527 of 16S rRNA. The polypeptide is Ribosomal RNA small subunit methyltransferase G (Neisseria meningitidis serogroup C (strain 053442)).